The primary structure comprises 467 residues: Cell division protein FtsP (467 aa).

Residues 1–28 (MRSLTRRDFLKSGILASSLSCIPQSVMA) constitute a signal peptide (tat-type signal).

This sequence belongs to the FtsP family. In terms of processing, predicted to be exported by the Tat system. The position of the signal peptide cleavage has not been experimentally proven.

It is found in the periplasm. In terms of biological role, cell division protein that is required for growth during stress conditions. May be involved in protecting or stabilizing the divisomal assembly under conditions of stress. This chain is Cell division protein FtsP, found in Histophilus somni (strain 2336) (Haemophilus somnus).